A 226-amino-acid polypeptide reads, in one-letter code: Ribose-5-phosphate isomerase A (226 aa).

Substrate-binding positions include 28 to 31 (TGST), 83 to 86 (DGAD), and 97 to 100 (KGGG). The active-site Proton acceptor is Glu106. Lys124 serves as a coordination point for substrate.

This sequence belongs to the ribose 5-phosphate isomerase family. Homotetramer.

The catalysed reaction is aldehydo-D-ribose 5-phosphate = D-ribulose 5-phosphate. The protein operates within carbohydrate biosynthesis; D-ribose 5-phosphate biosynthesis. Functionally, catalyzes the reversible conversion of ribose-5-phosphate to ribulose 5-phosphate. The protein is Ribose-5-phosphate isomerase A of Methanocaldococcus jannaschii (strain ATCC 43067 / DSM 2661 / JAL-1 / JCM 10045 / NBRC 100440) (Methanococcus jannaschii).